A 48-amino-acid chain; its full sequence is Light-harvesting polypeptide B-885 beta-1 chain (48 aa).

The Cytoplasmic segment spans residues 1-20; that stretch reads AEDRKSLSGLTEQEAQEFGT. Residues 21-43 form a helical membrane-spanning segment; the sequence is LYTQGVAFVAVIAVVAHALVWAW. Position 37 (histidine 37) interacts with a bacteriochlorophyll. Over 44–48 the chain is Periplasmic; the sequence is RPWLQ.

The protein belongs to the antenna complex beta subunit family. The core complex is formed by different alpha and beta chains, binding bacteriochlorophyll molecules, and arranged most probably in tetrameric structures disposed around the reaction center. The non-pigmented gamma chains may constitute additional components.

It localises to the cell inner membrane. Antenna complexes are light-harvesting systems, which transfer the excitation energy to the reaction centers. This chain is Light-harvesting polypeptide B-885 beta-1 chain, found in Rhodocyclus tenuis (Rhodospirillum tenue).